The sequence spans 397 residues: Vacuolar protein sorting-associated protein 37A (397 aa).

S18 is modified (phosphoserine). Residues 308-397 (KSTFEKKMQR…AMHSQFHAPL (90 aa)) enclose the VPS37 C-terminal domain.

Belongs to the VPS37 family. In terms of assembly, component of the ESCRT-I complex (endosomal sorting complex required for transport I) which consists of TSG101, VPS28, a VPS37 protein (VPS37A to -D) and MVB12A or MVB12B in a 1:1:1:1 stoichiometry. Interacts with TSG101, VPS28 and HGS. Component of an ESCRT-I complex (endosomal sorting complex required for transport I) which consists of TSG101, VPS28, VPS37A and UBAP1 in a 1:1:1:1 stoichiometry.

Its subcellular location is the late endosome membrane. It localises to the nucleus. Functionally, component of the ESCRT-I complex, a regulator of vesicular trafficking process. Required for the sorting of endocytic ubiquitinated cargos into multivesicular bodies. May be involved in cell growth and differentiation. In Mus musculus (Mouse), this protein is Vacuolar protein sorting-associated protein 37A (Vps37a).